Reading from the N-terminus, the 922-residue chain is 1,4-alpha-glucan-branching enzyme 1, chloroplastic/amyloplastic (922 aa).

The transit peptide at 1–47 (MVYTISGIRFPVLPSLHKSTLRCDRRASSHSFFLKNNSSSFSRTSLY) directs the protein to the chloroplast. The interval 83-130 (LENPDITSEDAQNLEDLTMKDGNKYNIDESTSSYREVGDEKGSVTSSS) is disordered. Basic and acidic residues predominate over residues 99 to 109 (LTMKDGNKYNI). Aspartate 494 (nucleophile) is an active-site residue. Glutamate 549 (proton donor) is an active-site residue. The segment at 870 to 922 (VESEPIELSVEEAESEPIERSVEEVESETTQQSVEVESETTQQSVEVESETTQ) is disordered. The segment covering 897–922 (ETTQQSVEVESETTQQSVEVESETTQ) has biased composition (low complexity).

Belongs to the glycosyl hydrolase 13 family. GlgB subfamily. As to quaternary structure, monomer. As to expression, expressed in roots, leaves, stipules, pods and flowers.

Its subcellular location is the plastid. The protein localises to the chloroplast. It is found in the amyloplast. The catalysed reaction is Transfers a segment of a (1-&gt;4)-alpha-D-glucan chain to a primary hydroxy group in a similar glucan chain.. It participates in glycan biosynthesis; starch biosynthesis. Its function is as follows. Catalyzes the formation of the alpha-1,6-glucosidic linkages in starch by scission of a 1,4-alpha-linked oligosaccharide from growing alpha-1,4-glucan chains and the subsequent attachment of the oligosaccharide to the alpha-1,6 position. May preferentially transfer short chains during branching. Responsible for the synthesis of about 75% of the amylopectin found in the starch granules of mature embryos. In Pisum sativum (Garden pea), this protein is 1,4-alpha-glucan-branching enzyme 1, chloroplastic/amyloplastic (SBEI).